The primary structure comprises 836 residues: DNA-directed RNA polymerase subunit beta' (836 aa).

Zn(2+) contacts are provided by C71, C73, C90, and C93. Residues D623, D625, and D627 each contribute to the Mg(2+) site.

It belongs to the RNA polymerase beta' chain family. RpoC1 subfamily. As to quaternary structure, in plastids the minimal PEP RNA polymerase catalytic core is composed of four subunits: alpha, beta, beta', and beta''. When a (nuclear-encoded) sigma factor is associated with the core the holoenzyme is formed, which can initiate transcription. Mg(2+) serves as cofactor. Zn(2+) is required as a cofactor.

The protein resides in the plastid. Its subcellular location is the chloroplast. The catalysed reaction is RNA(n) + a ribonucleoside 5'-triphosphate = RNA(n+1) + diphosphate. Its function is as follows. DNA-dependent RNA polymerase catalyzes the transcription of DNA into RNA using the four ribonucleoside triphosphates as substrates. The protein is DNA-directed RNA polymerase subunit beta' (rpoC1) of Chlorella vulgaris (Green alga).